Reading from the N-terminus, the 38-residue chain is Spheniscin-1 (38 aa).

Cystine bridges form between cysteine 5-cysteine 33, cysteine 12-cysteine 27, and cysteine 17-cysteine 34.

As to quaternary structure, monomer. As to expression, secreted into the stomach cavity.

Its subcellular location is the secreted. Its function is as follows. Has antifungal activity and antibacterial activity against Gram-positive and Gram-negative bacteria. Involved in the process of food preservation in the stomach during the incubation fast. May also be present during infection. The chain is Spheniscin-1 from Aptenodytes patagonicus (King penguin).